Reading from the N-terminus, the 179-residue chain is ATP synthase subunit delta (179 aa).

The protein belongs to the ATPase delta chain family. In terms of assembly, F-type ATPases have 2 components, F(1) - the catalytic core - and F(0) - the membrane proton channel. F(1) has five subunits: alpha(3), beta(3), gamma(1), delta(1), epsilon(1). F(0) has three main subunits: a(1), b(2) and c(10-14). The alpha and beta chains form an alternating ring which encloses part of the gamma chain. F(1) is attached to F(0) by a central stalk formed by the gamma and epsilon chains, while a peripheral stalk is formed by the delta and b chains.

The protein resides in the cell inner membrane. Its function is as follows. F(1)F(0) ATP synthase produces ATP from ADP in the presence of a proton or sodium gradient. F-type ATPases consist of two structural domains, F(1) containing the extramembraneous catalytic core and F(0) containing the membrane proton channel, linked together by a central stalk and a peripheral stalk. During catalysis, ATP synthesis in the catalytic domain of F(1) is coupled via a rotary mechanism of the central stalk subunits to proton translocation. This protein is part of the stalk that links CF(0) to CF(1). It either transmits conformational changes from CF(0) to CF(1) or is implicated in proton conduction. This Burkholderia thailandensis (strain ATCC 700388 / DSM 13276 / CCUG 48851 / CIP 106301 / E264) protein is ATP synthase subunit delta.